A 159-amino-acid polypeptide reads, in one-letter code: 6,7-dimethyl-8-ribityllumazine synthase (159 aa).

5-amino-6-(D-ribitylamino)uracil contacts are provided by residues Trp-26, 57 to 59 (ALE), and 79 to 81 (CVV). Residue 84–85 (GT) coordinates (2S)-2-hydroxy-3-oxobutyl phosphate. The Proton donor role is filled by His-87. Asn-112 serves as a coordination point for 5-amino-6-(D-ribitylamino)uracil. Arg-126 is a binding site for (2S)-2-hydroxy-3-oxobutyl phosphate.

Belongs to the DMRL synthase family.

It catalyses the reaction (2S)-2-hydroxy-3-oxobutyl phosphate + 5-amino-6-(D-ribitylamino)uracil = 6,7-dimethyl-8-(1-D-ribityl)lumazine + phosphate + 2 H2O + H(+). It participates in cofactor biosynthesis; riboflavin biosynthesis; riboflavin from 2-hydroxy-3-oxobutyl phosphate and 5-amino-6-(D-ribitylamino)uracil: step 1/2. Catalyzes the formation of 6,7-dimethyl-8-ribityllumazine by condensation of 5-amino-6-(D-ribitylamino)uracil with 3,4-dihydroxy-2-butanone 4-phosphate. This is the penultimate step in the biosynthesis of riboflavin. The sequence is that of 6,7-dimethyl-8-ribityllumazine synthase from Corynebacterium glutamicum (strain ATCC 13032 / DSM 20300 / JCM 1318 / BCRC 11384 / CCUG 27702 / LMG 3730 / NBRC 12168 / NCIMB 10025 / NRRL B-2784 / 534).